The chain runs to 277 residues: Small ribosomal subunit protein uS2 (277 aa).

Residues Y228–E241 are compositionally biased toward basic and acidic residues. Residues Y228–E277 are disordered.

It belongs to the universal ribosomal protein uS2 family.

The chain is Small ribosomal subunit protein uS2 from Syntrophus aciditrophicus (strain SB).